The sequence spans 294 residues: Proline iminopeptidase (294 aa).

Residues 27 to 277 (PPLVLLHGGP…GCGHMSFVEK (251 aa)) enclose the AB hydrolase-1 domain. S105 serves as the catalytic Nucleophile. The active site involves D244. The active-site Proton donor is the H271.

Belongs to the peptidase S33 family.

It is found in the cell envelope. The enzyme catalyses Release of N-terminal proline from a peptide.. Releases the N-terminal proline from various substrates. This Lactobacillus helveticus (strain DPC 4571) protein is Proline iminopeptidase.